A 78-amino-acid chain; its full sequence is Small ribosomal subunit protein uS17 (78 aa).

Belongs to the universal ribosomal protein uS17 family. In terms of assembly, part of the 30S ribosomal subunit.

Functionally, one of the primary rRNA binding proteins, it binds specifically to the 5'-end of 16S ribosomal RNA. The protein is Small ribosomal subunit protein uS17 of Sinorhizobium medicae (strain WSM419) (Ensifer medicae).